A 792-amino-acid chain; its full sequence is MAAINPWASWGALTDQSWGMTAVDPWASWALCPQYPAWHVEGSLEEGRRATGLPAAQVQEPVTFKDVAVDFTQEEWGQLDLVQRTLYRDVMLETYGHLLSVGNQIAKPEVISLLEQGEEPWSVEQACPQRTCPEWVRNLESKALIPAQSIFEEEQSHGMKLERYIWDDPWFSRLEVLGCKDQLEMYHMNQSTAMRQMVFMQKQVLSQRSSEFCGLGAEFSQNLNFVPSQRVSQIEHFYKPDTHAQSWRCDSAIMYADKVTCENNDYDKTVYQSIQPIYPARIQTGDNLFKCTDAVKSFNHIIHFGDHKGIHTGEKLYEYKECHQIFNQSPSFNEHPRLHVGENQYNYKEYENIFYFSSFMEHQKIGTVEKAYKYNEWEKVFGYDSFLTQHTSTYTAEKPYDYNECGTSFIWSSYLIQHKKTHTGEKPYECDKCGKVFRNRSALTKHERTHTGIKPYECNKCGKAFSWNSHLIVHKRIHTGEKPYVCNECGKSFNWNSHLIGHQRTHTGEKPFECTECGKSFSWSSHLIAHMRMHTGEKPFKCDECEKAFRDYSALSKHERTHSGAKPYKCTECGKSFSWSSHLIAHQRTHTGEKPYNCQECGKAFRERSALTKHEIIHSGIKPYECNKCGKSCSQMAHLVRHQRTHTGEKPYECNKCGKSFSQSCHLVAHRRIHTGEKPYKCNQCERSFNCSSHLIAHRRTHTGEKPYRCNECGKAFNESSSLIVHLRNHTGEKPYKCNHCEKAFCKNSSLIIHQRMHSGEKRFICSECGKAFSGHSALLQHQRNHSEEKLN.

A KRAB domain is found at valine 62 to proline 133. The segment at phenylalanine 289–histidine 311 adopts a C2H2-type 1; degenerate zinc-finger fold. A C2H2-type 2; degenerate zinc finger spans residues tyrosine 317–glutamine 344. The C2H2-type 3; degenerate zinc finger occupies tyrosine 400–histidine 422. 13 C2H2-type zinc fingers span residues tyrosine 428–histidine 450, tyrosine 456–histidine 478, tyrosine 484–histidine 506, phenylalanine 512–histidine 534, phenylalanine 540–histidine 562, tyrosine 568–histidine 590, tyrosine 596–histidine 618, tyrosine 624–histidine 646, tyrosine 652–histidine 674, tyrosine 680–histidine 702, tyrosine 708–histidine 730, tyrosine 736–histidine 758, and phenylalanine 764–histidine 786.

This sequence belongs to the krueppel C2H2-type zinc-finger protein family. In terms of tissue distribution, widely expressed in adult and fetal tissues.

The protein localises to the nucleus. Functionally, may act as a transcriptional repressor. This chain is Zinc finger protein 606 (ZNF606), found in Homo sapiens (Human).